Consider the following 150-residue polypeptide: Phosphopantetheine adenylyltransferase (150 aa).

Thr9 contributes to the substrate binding site. ATP-binding positions include 9-10 and His17; that span reads TF. 3 residues coordinate substrate: Lys41, Thr73, and Arg87. Residues 88–90, Glu98, and 122–128 each bind ATP; these read GIR and LTCVSST.

It belongs to the bacterial CoaD family. In terms of assembly, homohexamer. It depends on Mg(2+) as a cofactor.

It is found in the cytoplasm. The enzyme catalyses (R)-4'-phosphopantetheine + ATP + H(+) = 3'-dephospho-CoA + diphosphate. Its pathway is cofactor biosynthesis; coenzyme A biosynthesis; CoA from (R)-pantothenate: step 4/5. In terms of biological role, reversibly transfers an adenylyl group from ATP to 4'-phosphopantetheine, yielding dephospho-CoA (dPCoA) and pyrophosphate. The sequence is that of Phosphopantetheine adenylyltransferase from Bacteroides fragilis (strain ATCC 25285 / DSM 2151 / CCUG 4856 / JCM 11019 / LMG 10263 / NCTC 9343 / Onslow / VPI 2553 / EN-2).